The primary structure comprises 338 residues: uncharacterized protein (338 aa).

The chain crosses the membrane as a helical span at residues 20–40; it reads IFFTLTFSLSNLFLAICYLFL.

The protein resides in the membrane. This is an uncharacterized protein from Schizosaccharomyces pombe (strain 972 / ATCC 24843) (Fission yeast).